The sequence spans 310 residues: Lipoyl synthase (310 aa).

Cys-51, Cys-56, Cys-62, Cys-77, Cys-81, Cys-84, and Ser-290 together coordinate [4Fe-4S] cluster. The 218-residue stretch at 63 to 280 (WSRKTATYLA…RRVGESLGLF (218 aa)) folds into the Radical SAM core domain.

It belongs to the radical SAM superfamily. Lipoyl synthase family. The cofactor is [4Fe-4S] cluster.

It is found in the cytoplasm. The catalysed reaction is [[Fe-S] cluster scaffold protein carrying a second [4Fe-4S](2+) cluster] + N(6)-octanoyl-L-lysyl-[protein] + 2 oxidized [2Fe-2S]-[ferredoxin] + 2 S-adenosyl-L-methionine + 4 H(+) = [[Fe-S] cluster scaffold protein] + N(6)-[(R)-dihydrolipoyl]-L-lysyl-[protein] + 4 Fe(3+) + 2 hydrogen sulfide + 2 5'-deoxyadenosine + 2 L-methionine + 2 reduced [2Fe-2S]-[ferredoxin]. It functions in the pathway protein modification; protein lipoylation via endogenous pathway; protein N(6)-(lipoyl)lysine from octanoyl-[acyl-carrier-protein]: step 2/2. Its function is as follows. Catalyzes the radical-mediated insertion of two sulfur atoms into the C-6 and C-8 positions of the octanoyl moiety bound to the lipoyl domains of lipoate-dependent enzymes, thereby converting the octanoylated domains into lipoylated derivatives. The sequence is that of Lipoyl synthase from Chlamydia abortus (strain DSM 27085 / S26/3) (Chlamydophila abortus).